Reading from the N-terminus, the 876-residue chain is Phosphoenolpyruvate carboxylase (876 aa).

Catalysis depends on residues His-138 and Lys-543.

It belongs to the PEPCase type 1 family. Mg(2+) serves as cofactor.

It carries out the reaction oxaloacetate + phosphate = phosphoenolpyruvate + hydrogencarbonate. Functionally, forms oxaloacetate, a four-carbon dicarboxylic acid source for the tricarboxylic acid cycle. The sequence is that of Phosphoenolpyruvate carboxylase from Vibrio atlanticus (strain LGP32) (Vibrio splendidus (strain Mel32)).